We begin with the raw amino-acid sequence, 494 residues long: GTPase Der (494 aa).

EngA-type G domains are found at residues 3–166 and 208–381; these read PVVA…VGEK and IKLA…ECAT. Residues 9-16, 56-60, 118-121, 214-221, 261-265, and 326-329 contribute to the GTP site; these read GRPNVGKS, DTGGI, NKTD, DTAGV, and NKWD. Residues 382 to 466 enclose the KH-like domain; it reads RRVNTSMLTK…PIRIQFKEGE (85 aa).

The protein belongs to the TRAFAC class TrmE-Era-EngA-EngB-Septin-like GTPase superfamily. EngA (Der) GTPase family. Associates with the 50S ribosomal subunit.

Functionally, GTPase that plays an essential role in the late steps of ribosome biogenesis. The sequence is that of GTPase Der from Serratia proteamaculans (strain 568).